A 321-amino-acid polypeptide reads, in one-letter code: D-alanine--D-alanine ligase (321 aa).

An ATP-grasp domain is found at 121-315 (RIWFLTNNIN…FTNLIEEIIK (195 aa)). 147–199 (PMKRPYVIKPLTQGSSIGVEVIFAEDDFNFADYDFPYGDQVIIEQYIKGRELQ) is a binding site for ATP. Mg(2+) contacts are provided by E268, E282, and N284.

It belongs to the D-alanine--D-alanine ligase family. It depends on Mg(2+) as a cofactor. Mn(2+) serves as cofactor.

The protein localises to the cytoplasm. It carries out the reaction 2 D-alanine + ATP = D-alanyl-D-alanine + ADP + phosphate + H(+). The protein operates within cell wall biogenesis; peptidoglycan biosynthesis. In terms of biological role, cell wall formation. The protein is D-alanine--D-alanine ligase of Rickettsia rickettsii (strain Iowa).